The following is a 422-amino-acid chain: UDP-N-acetylmuramoylalanine--D-glutamate ligase (422 aa).

102–108 (GTNGKTT) is an ATP binding site.

The protein belongs to the MurCDEF family.

Its subcellular location is the cytoplasm. It carries out the reaction UDP-N-acetyl-alpha-D-muramoyl-L-alanine + D-glutamate + ATP = UDP-N-acetyl-alpha-D-muramoyl-L-alanyl-D-glutamate + ADP + phosphate + H(+). The protein operates within cell wall biogenesis; peptidoglycan biosynthesis. Cell wall formation. Catalyzes the addition of glutamate to the nucleotide precursor UDP-N-acetylmuramoyl-L-alanine (UMA). The polypeptide is UDP-N-acetylmuramoylalanine--D-glutamate ligase (Helicobacter pylori (strain J99 / ATCC 700824) (Campylobacter pylori J99)).